Consider the following 209-residue polypeptide: Uracil phosphoribosyltransferase (209 aa).

5-phospho-alpha-D-ribose 1-diphosphate contacts are provided by residues Arg-79, Arg-104, and 131 to 139 (DPMLATGGS). Residues Ile-194 and 199–201 (GDA) contribute to the uracil site. Asp-200 is a binding site for 5-phospho-alpha-D-ribose 1-diphosphate.

Belongs to the UPRTase family. It depends on Mg(2+) as a cofactor.

The catalysed reaction is UMP + diphosphate = 5-phospho-alpha-D-ribose 1-diphosphate + uracil. It functions in the pathway pyrimidine metabolism; UMP biosynthesis via salvage pathway; UMP from uracil: step 1/1. With respect to regulation, allosterically activated by GTP. Catalyzes the conversion of uracil and 5-phospho-alpha-D-ribose 1-diphosphate (PRPP) to UMP and diphosphate. The chain is Uracil phosphoribosyltransferase from Macrococcus caseolyticus (strain JCSC5402) (Macrococcoides caseolyticum).